The chain runs to 106 residues: uncharacterized protein (106 aa).

The signal sequence occupies residues 1–27; that stretch reads MHHFVPSISLFMASVSFSVFFSHLATS. The helical transmembrane segment at 42–62 threads the bilayer; the sequence is TLFSMVPLINSSFNLSVFLFF.

It is found in the membrane. This is an uncharacterized protein from Saccharomyces cerevisiae (strain ATCC 204508 / S288c) (Baker's yeast).